The primary structure comprises 65 residues: Alpha-like toxin Bom4 (65 aa).

Residues 2 to 64 form the LCN-type CS-alpha/beta domain; that stretch reads RDAYIAQPEN…VPIRIPGKCH (63 aa). Cystine bridges form between Cys-12-Cys-63, Cys-16-Cys-36, Cys-22-Cys-46, and Cys-26-Cys-48.

This sequence belongs to the long (4 C-C) scorpion toxin superfamily. Sodium channel inhibitor family. Alpha subfamily. In terms of tissue distribution, expressed by the venom gland.

The protein localises to the secreted. Its function is as follows. Alpha toxins bind voltage-independently at site-3 of sodium channels (Nav) and inhibit the inactivation of the activated channels, thereby blocking neuronal transmission. This alpha-like toxin is highly toxic to mice and insects. In Buthus occitanus mardochei (Moroccan scorpion), this protein is Alpha-like toxin Bom4.